A 504-amino-acid chain; its full sequence is Outer capsid protein VP5 (504 aa).

The interval 1–42 (MGKFTSFLKRAGSATKNALTSDAAKRMYKMAGKTLQKVVESE) is involved in membrane permeabilization.

The protein belongs to the orbivirus VP5 family.

Its subcellular location is the virion. VP5 protein is one of the two proteins (with VP2) which constitute the virus particle outer capsid. Acts as a membrane permeabilization protein that mediates release of viral particles from endosomal compartments into the cytoplasm. Permeabilization activity is probably negatively regulated by VP2 and is triggered by endosomal degradation of VP2 and exposure to low pH. This chain is Outer capsid protein VP5 (Segment-6), found in African horse sickness virus 6 (AHSV-6).